The chain runs to 282 residues: Putative hydrolase Bamb_4846 (282 aa).

The Mg(2+) site is built by Glu124, Glu126, and Asp155.

The protein belongs to the FAH family. The cofactor is Mg(2+).

The chain is Putative hydrolase Bamb_4846 from Burkholderia ambifaria (strain ATCC BAA-244 / DSM 16087 / CCUG 44356 / LMG 19182 / AMMD) (Burkholderia cepacia (strain AMMD)).